The chain runs to 145 residues: Ribonuclease H (145 aa).

Residues 1-141 (MQEVELFTDG…VDELANQAMD (141 aa)) enclose the RNase H type-1 domain. Residues Asp9, Glu47, Asp69, and Asp133 each contribute to the Mg(2+) site.

Belongs to the RNase H family. In terms of assembly, monomer. The cofactor is Mg(2+).

The protein resides in the cytoplasm. The catalysed reaction is Endonucleolytic cleavage to 5'-phosphomonoester.. Functionally, endonuclease that specifically degrades the RNA of RNA-DNA hybrids. This Hydrogenovibrio crunogenus (strain DSM 25203 / XCL-2) (Thiomicrospira crunogena) protein is Ribonuclease H.